The chain runs to 431 residues: BEL1-like homeodomain protein 5 (431 aa).

Residues 80–96 (PIYLKAAQELLNEIVNV) form an SR/KY domain region. The BELL domain stretch occupies residues 128–199 (GVAALQMKKA…AVKDMISLQI (72 aa)). Residues 228 to 290 (AWRPQRGLPE…NARVRMWKPL (63 aa)) constitute a DNA-binding region (homeobox). Positions 302–312 (EESRKGSDRYS) are enriched in basic and acidic residues. Residues 302 to 333 (EESRKGSDRYSTKGSSSKQPYNNTTSNESSNT) are disordered. A compositionally biased stretch (polar residues) spans 313–322 (TKGSSSKQPY). The span at 323 to 333 (NNTTSNESSNT) shows a compositional bias: low complexity.

The protein belongs to the TALE/BELL homeobox family. As to quaternary structure, may form heterodimeric complexes with TALE/KNOX proteins. Interacts with OFP1.

The protein resides in the nucleus. This Arabidopsis thaliana (Mouse-ear cress) protein is BEL1-like homeodomain protein 5 (BLH5).